A 236-amino-acid polypeptide reads, in one-letter code: UPF0502 protein Bcen2424_5610 (236 aa).

Belongs to the UPF0502 family.

This is UPF0502 protein Bcen2424_5610 from Burkholderia cenocepacia (strain HI2424).